Here is a 599-residue protein sequence, read N- to C-terminus: Ecdysone oxidase (599 aa).

FAD is bound by residues 137 to 140 (NDMV) and 537 to 538 (WH). His-538 acts as the Proton acceptor in catalysis.

Belongs to the GMC oxidoreductase family. It depends on FAD as a cofactor.

It carries out the reaction ecdysone + O2 = 3-dehydroecdysone + H2O2. Involved in the inactivation of ecdysteroid molting hormones by converting ecdysteroids into 3-dehydroecdysteroids. This Spodoptera littoralis (Egyptian cotton leafworm) protein is Ecdysone oxidase.